Consider the following 602-residue polypeptide: Leucine-rich repeat-containing protein 40 (602 aa).

S71 carries the phosphoserine modification. LRR repeat units follow at residues 83-104 (DLTK…LRLL), 106-127 (ALTV…IREL), 129-150 (NLQK…ITNL), 152-173 (NLKC…FEQL), 175-196 (NLED…FSSL), 198-219 (SLVR…INRM), 221-242 (RLKH…LAGM), 244-265 (SLEL…PSCS), 266-286 (LLKE…EHLK), 290-311 (SILV…IILL), 313-335 (SLER…GNLH), 336-356 (LKFL…IISK), 400-421 (TLKI…VFDA), 426-447 (IVTS…MVEL), 450-472 (MVSD…CVLQ), 473-494 (KLTF…MESL), 496-517 (RLQT…LYRI), 519-540 (TLET…KMKM), 543-564 (NLTT…LGNC), and 566-586 (NLRT…AILM).

This Homo sapiens (Human) protein is Leucine-rich repeat-containing protein 40 (LRRC40).